The chain runs to 91 residues: N(2)-fixation sustaining protein CowN (91 aa).

The protein belongs to the CowN family.

Its function is as follows. Is required to sustain N(2)-dependent growth in the presence of low levels of carbon monoxide (CO). Probably acts by protecting the N(2) fixation ability of the nitrogenase complex, which is inactivated in the presence of CO. This chain is N(2)-fixation sustaining protein CowN, found in Gluconacetobacter diazotrophicus (strain ATCC 49037 / DSM 5601 / CCUG 37298 / CIP 103539 / LMG 7603 / PAl5).